We begin with the raw amino-acid sequence, 321 residues long: Transcription factor ATOH8 (321 aa).

Disordered regions lie at residues 59–193 and 203–222; these read GLRD…SSYS and HQDS…AASS. A compositionally biased stretch (pro residues) spans 70 to 85; the sequence is VPVPVPVPVPVAPAVP. Over residues 93 to 109 the composition is skewed to basic and acidic residues; sequence AGERGGSRAPEVSDARK. Residues 121–132 show a composition bias toward pro residues; sequence LPTPPPPPPPAP. Low complexity predominate over residues 133–143; it reads QSQAPGGPEAQ. Residues 160–186 are compositionally biased toward pro residues; the sequence is PARPAPSAPPAPPAPPESTVRPAPPTR. The basic motif; degenerate stretch occupies residues 230-243; that stretch reads TRRLLANARERTRV. The bHLH domain occupies 230-282; sequence TRRLLANARERTRVHTISAAFEALRKQVPCYSYGQKLSKLAILRIACNYILSL. Residues 244–282 form a helix-loop-helix motif region; the sequence is HTISAAFEALRKQVPCYSYGQKLSKLAILRIACNYILSL.

In terms of assembly, efficient DNA binding requires dimerization with another bHLH protein. Interacts with NEUROG3 and NEUROD1. Interacts with ZFPM2; mediates indirect interaction with GATA4. Forms a heterodimer with TCF3; repress transcription of TCF3 and TCF3/NEUROG3 dimer-induced transactivation of E box-dependent promoters. As to expression, expressed in lung, liver, kidney, heart and pancreas. Expressed in endothel of umbilical vessels.

Its subcellular location is the nucleus. The protein resides in the nucleus speckle. It localises to the cytoplasm. Functionally, transcription factor that binds a palindromic (canonical) core consensus DNA sequence 5'-CANNTG- 3' known as an E-box element, possibly as a heterodimer with other bHLH proteins. Regulates endothelial cell proliferation, migration and tube-like structures formation. Modulates endothelial cell differentiation through NOS3. May be implicated in specification and differentiation of neuronal cell lineages in the brain. May participate in kidney development and may be involved in podocyte differentiation. During early embryonic development is involved in tissue-specific differentiation processes that are dependent on class II bHLH factors and namely modulates the differentiation program initiated by the pro-endocrine factor NEUROG3. During myogenesis, may play a role during the transition of myoblasts from the proliferative phase to the differentiation phase. Positively regulates HAMP transcription in two ways, firstly by acting directly on the HAMP promoter via E-boxes binding and indirectly through increased phosphorylation of SMAD protein complex. Repress NEUROG3-dependent gene activation in a gene-specific manner through at least two mechanisms; requires only either the sequestering of a general partner such as TCF3 through heterodimerization, either also requires binding of the bHLH domain to DNA via a basic motif. The polypeptide is Transcription factor ATOH8 (Homo sapiens (Human)).